The chain runs to 360 residues: MNMKPATAKISSVALKHNIQTIKQKAPQSKIIAVVKANAYGHGVVFVSAAVEELVDCFGVARLEEALSLRSNGITKPILLLEGFFCDKDLPVIAINNIQTVVHNVEQLEALKAAKVPNPIKVWLKIDTGMHRLGVALEDVEYFYQALRDSENVDPQIGFVSHFSRADELECDYTKLQLTRFLNATQNKAGEKSIAASGGILFWESSHLDWIRPGIIMYGISPINVPAQEYDLTPVMTLTSSLIAIKQHKKGEPVGYGGIWVSDKDTKIGVVAIGYGDGYPRDIPTGTPVYLNGRRVPIVGRVSMDMLTVDLGAEAQDKVGDEVILWGKELPIEEIADISGVISYELITKLTPRVLTEYID.

Catalysis depends on K36, which acts as the Proton acceptor; specific for D-alanine. K36 carries the post-translational modification N6-(pyridoxal phosphate)lysine. A substrate-binding site is contributed by R132. Y256 serves as the catalytic Proton acceptor; specific for L-alanine. Position 304 (M304) interacts with substrate.

It belongs to the alanine racemase family. Pyridoxal 5'-phosphate serves as cofactor.

It carries out the reaction L-alanine = D-alanine. It functions in the pathway amino-acid biosynthesis; D-alanine biosynthesis; D-alanine from L-alanine: step 1/1. Functionally, catalyzes the interconversion of L-alanine and D-alanine. May also act on other amino acids. The polypeptide is Alanine racemase (alr) (Pasteurella multocida (strain Pm70)).